An 85-amino-acid chain; its full sequence is Small ribosomal subunit protein bS20 (85 aa).

Disordered regions lie at residues 1–25 (MANI…ASIK) and 62–85 (ARKG…QVNA).

It belongs to the bacterial ribosomal protein bS20 family.

In terms of biological role, binds directly to 16S ribosomal RNA. The sequence is that of Small ribosomal subunit protein bS20 from Bacillus cereus (strain G9842).